Consider the following 307-residue polypeptide: Pantothenate kinase (307 aa).

90–97 (GSVAVGKS) contributes to the ATP binding site.

The protein belongs to the prokaryotic pantothenate kinase family.

It is found in the cytoplasm. It carries out the reaction (R)-pantothenate + ATP = (R)-4'-phosphopantothenate + ADP + H(+). Its pathway is cofactor biosynthesis; coenzyme A biosynthesis; CoA from (R)-pantothenate: step 1/5. This chain is Pantothenate kinase, found in Limosilactobacillus fermentum (strain NBRC 3956 / LMG 18251) (Lactobacillus fermentum).